A 631-amino-acid chain; its full sequence is Phosphomethylpyrimidine synthase (631 aa).

Substrate-binding positions include Asn-239, Met-268, Tyr-297, His-333, 353-355 (SRG), 394-397 (DGLR), and Glu-433. His-437 contributes to the Zn(2+) binding site. Tyr-460 contributes to the substrate binding site. His-501 is a Zn(2+) binding site. Residues Cys-581, Cys-584, and Cys-589 each coordinate [4Fe-4S] cluster.

This sequence belongs to the ThiC family. As to quaternary structure, homodimer. Requires [4Fe-4S] cluster as cofactor.

The enzyme catalyses 5-amino-1-(5-phospho-beta-D-ribosyl)imidazole + S-adenosyl-L-methionine = 4-amino-2-methyl-5-(phosphooxymethyl)pyrimidine + CO + 5'-deoxyadenosine + formate + L-methionine + 3 H(+). It functions in the pathway cofactor biosynthesis; thiamine diphosphate biosynthesis. Its function is as follows. Catalyzes the synthesis of the hydroxymethylpyrimidine phosphate (HMP-P) moiety of thiamine from aminoimidazole ribotide (AIR) in a radical S-adenosyl-L-methionine (SAM)-dependent reaction. This Citrobacter koseri (strain ATCC BAA-895 / CDC 4225-83 / SGSC4696) protein is Phosphomethylpyrimidine synthase.